A 547-amino-acid chain; its full sequence is Solute carrier family 22 member 25 (547 aa).

Over 1 to 9 the chain is Cytoplasmic; sequence MAFQDLLDQ. The helical transmembrane segment at 10 to 30 threads the bilayer; the sequence is VGGLGRFQILQMVFLIMFNVI. Topologically, residues 31 to 145 are extracellular; that stretch reads VYHQTQLENF…DLVCESQPLN (115 aa). N-linked (GlcNAc...) asparagine glycosylation is found at N56 and N102. Residues 146 to 166 traverse the membrane as a helical segment; it reads SVAKFLFMAGMMVGGNLYGHL. Topologically, residues 167–177 are cytoplasmic; it reads SDRFGRKFVLR. A helical membrane pass occupies residues 178 to 198; that stretch reads WSYLQLAIVGTCAAFAPTILV. Residues 199 to 204 are Extracellular-facing; it reads YCSLRF. The helical transmembrane segment at 205-225 threads the bilayer; the sequence is LAGAATFSIIVNTVLLIVEWI. The Cytoplasmic segment spans residues 226–234; sequence THQFCAMAL. A helical transmembrane segment spans residues 235–255; sequence TLTLCAASIGHITLGSLAFVI. At 256-259 the chain is on the extracellular side; the sequence is RDQC. Residues 260–280 traverse the membrane as a helical segment; the sequence is ILQLVMSAPCFVFFLFSRWLA. The Cytoplasmic portion of the chain corresponds to 281 to 349; sequence ESARWLIINN…LLRIPNICKR (69 aa). The helical transmembrane segment at 350–370 threads the bilayer; it reads ICFLSFVRFASTIPFWGLTLH. Residues 371–377 lie on the Extracellular side of the membrane; sequence LQHLGNN. Residues 378-398 form a helical membrane-spanning segment; that stretch reads VFLLQTLFGAVTLLANCVAPW. The Cytoplasmic portion of the chain corresponds to 399–406; that stretch reads ALNHMSRR. Residues 407–427 form a helical membrane-spanning segment; it reads LSQMLLMFLLATCLLAIIFVP. The Extracellular segment spans residues 428 to 434; that stretch reads QEMQTLR. The chain crosses the membrane as a helical span at residues 435-455; the sequence is VVLATLGVGAASLGITCSTAQ. Residues 456 to 470 are Cytoplasmic-facing; sequence ENELIPSIIRGRATG. Residues 471–491 form a helical membrane-spanning segment; sequence ITGNFANIGGALASLMMILSI. The Extracellular portion of the chain corresponds to 492–494; sequence YSR. A helical transmembrane segment spans residues 495–515; that stretch reads PLPWIIYGVFAILSGLVVLLL. Residues 516-547 are Cytoplasmic-facing; it reads PETRNQPLLDSIQDVENEGVNSLAAPQRSSVL.

The protein belongs to the major facilitator (TC 2.A.1) superfamily. Organic cation transporter (TC 2.A.1.19) family. In terms of tissue distribution, expressed exclusively in liver in both embryo and adult.

Its subcellular location is the membrane. The sequence is that of Solute carrier family 22 member 25 from Homo sapiens (Human).